The primary structure comprises 466 residues: Vacuolar-processing enzyme delta-isozyme (466 aa).

A signal peptide spans 1 to 24 (MSSPLGHFQILVFLHALLIFSAES). An N-linked (GlcNAc...) asparagine glycan is attached at asparagine 137. Residue histidine 164 is part of the active site. Cysteine 206 (nucleophile) is an active-site residue. An intrachain disulfide couples cysteine 239 to cysteine 253. N-linked (GlcNAc...) asparagine glycosylation is present at asparagine 322. Intrachain disulfides connect cysteine 417/cysteine 447 and cysteine 429/cysteine 464.

This sequence belongs to the peptidase C13 family. In terms of processing, auto-catalytic activation. As to expression, seed specific. Restricted to developing seeds at 7 days after anthesis, and, at lower levels, detected in flowers. Detected in siliques, specifically in seed coats (at protein level).

It is found in the secreted. Its subcellular location is the extracellular space. The protein resides in the cell wall. It localises to the vacuole. It catalyses the reaction Hydrolysis of proteins and small molecule substrates at -Asn-|-Xaa- bonds.. With respect to regulation, strongly inhibited by biotin-YVAD-fmk (a caspase-1 inhibitor) and by Ac-DEVD-fmk. In terms of biological role, asparagine-specific endopeptidase that may be involved in processing of proteins targeted to vacuoles. Probably involved in post-translational proteolysis of seed storage proteins in the protein storage vacuole of developing seeds. Exhibits a caspase-1-like activity in extracellular granules. At the early stage of seed development, required for the formation of the seed coat, by regulating cell death of specific cell layers in inner integument. This chain is Vacuolar-processing enzyme delta-isozyme, found in Arabidopsis thaliana (Mouse-ear cress).